The following is a 692-amino-acid chain: ATP-dependent DNA helicase DinG (692 aa).

Positions asparagine 16–alanine 293 constitute a Helicase ATP-binding domain. ATP is bound at residue alanine 56 to serine 63. Residue cysteine 123 coordinates [4Fe-4S] cluster. The DEAH box motif lies at asparagine 134–glutamine 137. 2 residues coordinate [4Fe-4S] cluster: cysteine 192 and cysteine 202. The DEAH box signature appears at aspartate 247–histidine 250. Residues leucine 514–serine 692 form the Helicase C-terminal domain.

The protein belongs to the helicase family. DinG subfamily. Type 1 sub-subfamily. The cofactor is [4Fe-4S] cluster.

It carries out the reaction Couples ATP hydrolysis with the unwinding of duplex DNA at the replication fork by translocating in the 5'-3' direction. This creates two antiparallel DNA single strands (ssDNA). The leading ssDNA polymer is the template for DNA polymerase III holoenzyme which synthesizes a continuous strand.. It catalyses the reaction ATP + H2O = ADP + phosphate + H(+). DNA-dependent ATPase and 5'-3' DNA helicase. Unwinds D-loops, R-loops, forked DNA and G-quadruplex DNA. The chain is ATP-dependent DNA helicase DinG from Photobacterium profundum (strain SS9).